A 271-amino-acid polypeptide reads, in one-letter code: Small ribosomal subunit protein uS2 (271 aa).

Basic and acidic residues predominate over residues 229–242 (KERKGKDAEEELKK). A disordered region spans residues 229 to 271 (KERKGKDAEEELKKAAAPKAAPAAEAAPAAEAPAAPVVEAAAE). Over residues 243–271 (AAAPKAAPAAEAAPAAEAPAAPVVEAAAE) the composition is skewed to low complexity.

Belongs to the universal ribosomal protein uS2 family.

The protein is Small ribosomal subunit protein uS2 of Nitratidesulfovibrio vulgaris (strain DSM 19637 / Miyazaki F) (Desulfovibrio vulgaris).